Consider the following 949-residue polypeptide: Zinc finger CCHC domain-containing protein 14 (949 aa).

Disordered regions lie at residues 25–44 (SSLN…PGGA), 59–92 (EAPV…LGKH), 200–221 (STSS…LSKV), 236–262 (AGIP…LPHC), 355–457 (KEKS…DKEK), and 739–779 (PESS…PQPA). Residues 28-43 (NGGGGHGGKGAPGPGG) show a composition bias toward gly residues. The segment covering 61–78 (PVSSVSNSLENALHTSAH) has biased composition (polar residues). The span at 200–219 (STSSPPQQLQSPSPGNPSLS) shows a compositional bias: low complexity. Over residues 395-411 (HAAELRVEVEQPHHQLP) the composition is skewed to basic and acidic residues. Residues 416 to 425 (SSEYSSSSSS) show a composition bias toward low complexity. Over residues 431–457 (AREESSDSAEENDRRVEIHLESSDKEK) the composition is skewed to basic and acidic residues. The CCHC-type zinc finger occupies 906 to 923 (LSCYNCGATGHRAQDCKQ).

This chain is Zinc finger CCHC domain-containing protein 14 (ZCCHC14), found in Homo sapiens (Human).